A 123-amino-acid chain; its full sequence is Small ribosomal subunit protein uS12 (123 aa).

The disordered stretch occupies residues 1–28 (MPTIQQLIRNPREPKRTRTKTPALKACP). Position 89 is a 3-methylthioaspartic acid (Asp89). Positions 104–123 (TQPVKNRKQRRSHYGAKKPK) are disordered. Residues 108–123 (KNRKQRRSHYGAKKPK) show a composition bias toward basic residues.

It belongs to the universal ribosomal protein uS12 family. Part of the 30S ribosomal subunit. Contacts proteins S8 and S17. May interact with IF1 in the 30S initiation complex.

Functionally, with S4 and S5 plays an important role in translational accuracy. In terms of biological role, interacts with and stabilizes bases of the 16S rRNA that are involved in tRNA selection in the A site and with the mRNA backbone. Located at the interface of the 30S and 50S subunits, it traverses the body of the 30S subunit contacting proteins on the other side and probably holding the rRNA structure together. The combined cluster of proteins S8, S12 and S17 appears to hold together the shoulder and platform of the 30S subunit. In Hyphomonas neptunium (strain ATCC 15444), this protein is Small ribosomal subunit protein uS12.